The primary structure comprises 425 residues: MATVIKNGTVYQNGRLIKADVLIEGKKIKAIGTDLDAEKIIDAQGMLVSPGLVDVHVHYRDPGQTYKEDIKTGSEAAARGGFTTVGAMPNVTPVPNTPELMKKMVEENKHKGVVHIFQYGPITNDETTDIIPDYAALKKAGAFALSNDGHGVQTAQTMYLAMQKAKENNLIIATHAQDDSLFNKGIVNEGVAAKKLDLPPVTELAETTQIARDLLLAQKTGVHYHICHVSTKTSVELVRLAKARGINVTCEVAPHHILLTDSDIPKDNGYFKMNPPLRNKEDQAALLVGLLDGTIDLIATDHAPHAKSEKQGGMKNAAFGITGSETAFSTLYTKFVKEEKVLSLEQLLALLSDKPAKVFGIENAGVLEPGKNADVAIFDIEHKNEIKEADFKSKGVNTPFTGQKVYGETVMTLVDGEVVYQRGTK.

Residues His56 and His58 each contribute to the Zn(2+) site. Residues 58–60 (HYR) and Asn90 contribute to the substrate site. 3 residues coordinate Zn(2+): Asp148, His175, and His228. Asn274 provides a ligand contact to substrate. Asp301 lines the Zn(2+) pocket. Residue Asp301 is part of the active site. Substrate is bound by residues His305 and 319–320 (FG).

Belongs to the metallo-dependent hydrolases superfamily. DHOase family. Class I DHOase subfamily. Zn(2+) is required as a cofactor.

It carries out the reaction (S)-dihydroorotate + H2O = N-carbamoyl-L-aspartate + H(+). Its pathway is pyrimidine metabolism; UMP biosynthesis via de novo pathway; (S)-dihydroorotate from bicarbonate: step 3/3. In terms of biological role, catalyzes the reversible cyclization of carbamoyl aspartate to dihydroorotate. The chain is Dihydroorotase from Lactobacillus gasseri (strain ATCC 33323 / DSM 20243 / BCRC 14619 / CIP 102991 / JCM 1131 / KCTC 3163 / NCIMB 11718 / NCTC 13722 / AM63).